Here is a 1183-residue protein sequence, read N- to C-terminus: Translation initiation factor IF-2 (1183 aa).

Disordered regions lie at residues 55-512 (KSKT…KVHI) and 538-574 (ASLA…RQRR). The segment covering 83-99 (TQKDQKTEPKKKNHDQT) has biased composition (basic and acidic residues). Composition is skewed to polar residues over residues 100-143 (ELSQ…QITA) and 165-177 (KPLT…IPQS). Basic and acidic residues predominate over residues 220–229 (PKIDIQDKKP). Over residues 231–252 (QPNNQKAKTRINQGEISPQKVG) the composition is skewed to polar residues. Positions 253 to 267 (QGNIQKIKSQNKQNQ) are enriched in low complexity. Over residues 288–304 (IRREKPVNKPHTNEVRN) the composition is skewed to basic and acidic residues. Composition is skewed to polar residues over residues 324-349 (QGLS…NRQG) and 357-367 (NRTTQGQNRPG). Positions 485–499 (GRPDWDDSAKLDALR) are enriched in basic and acidic residues. Basic residues-rich tracts occupy residues 544-553 (SKPKVGKRNN) and 560-574 (LKKR…RQRR). The 173-residue stretch at 675–847 (RRPPVVTVMG…VLLVTEVEDL (173 aa)) folds into the tr-type G domain. Positions 684 to 691 (GHVDHGKT) are G1. A GTP-binding site is contributed by 684–691 (GHVDHGKT). Residues 709 to 713 (GITQH) are G2. The tract at residues 734 to 737 (DTPG) is G3. GTP contacts are provided by residues 734–738 (DTPGH) and 788–791 (NKID). The interval 788 to 791 (NKID) is G4. Positions 824–826 (SAI) are G5.

This sequence belongs to the TRAFAC class translation factor GTPase superfamily. Classic translation factor GTPase family. IF-2 subfamily.

The protein resides in the cytoplasm. One of the essential components for the initiation of protein synthesis. Protects formylmethionyl-tRNA from spontaneous hydrolysis and promotes its binding to the 30S ribosomal subunits. Also involved in the hydrolysis of GTP during the formation of the 70S ribosomal complex. The protein is Translation initiation factor IF-2 of Prochlorococcus marinus (strain NATL1A).